A 600-amino-acid chain; its full sequence is NADPH-dependent diflavin oxidoreductase 1 (600 aa).

A Flavodoxin-like domain is found at 6–150; that stretch reads LLILYGSQTG…VVDPWLKDLW (145 aa). Residues 12–17, 59–62, 97–106, and D132 contribute to the FMN site; these read SQTGTA, ATTG, and LGDSSYPKFN. The FAD-binding FR-type domain maps to 210–449; that stretch reads IHPFLAPVLS…WVKKGSMKFP (240 aa). FAD is bound by residues R354, 386–389, and 420–423; these read RAFS and GLCS. NADP(+) is bound by residues T463, 518-519, and 524-528; these read SR and KIYVQ. W599 serves as a coordination point for FAD.

It belongs to the NADPH-dependent diflavin oxidoreductase NDOR1 family. In the N-terminal section; belongs to the flavodoxin family. The protein in the C-terminal section; belongs to the flavoprotein pyridine nucleotide cytochrome reductase family. Interacts with ciapin1; as part of the cytosolic iron-sulfur (Fe-S) protein assembly (CIA) machinery. Requires FAD as cofactor. FMN serves as cofactor.

The protein localises to the cytoplasm. The protein resides in the perinuclear region. It catalyses the reaction 2 oxidized [2Fe-2S]-[protein] + NADPH = 2 reduced [2Fe-2S]-[protein] + NADP(+) + H(+). Functionally, NADPH-dependent reductase which is a central component of the cytosolic iron-sulfur (Fe-S) protein assembly (CIA) machinery. Transfers electrons from NADPH via its FAD and FMN prosthetic groups to the [2Fe-2S] cluster of ciapin1, another key component of the CIA machinery. In turn, this reduced cluster provides electrons for assembly of cytosolic iron-sulfur cluster proteins. It can also reduce the [2Fe-2S] cluster of cisd1 and activate this protein implicated in Fe/S cluster repair. In Xenopus laevis (African clawed frog), this protein is NADPH-dependent diflavin oxidoreductase 1.